The sequence spans 262 residues: Imidazole glycerol phosphate synthase subunit HisF (262 aa).

Residues aspartate 11 and aspartate 130 contribute to the active site.

This sequence belongs to the HisA/HisF family. Heterodimer of HisH and HisF.

It localises to the cytoplasm. The catalysed reaction is 5-[(5-phospho-1-deoxy-D-ribulos-1-ylimino)methylamino]-1-(5-phospho-beta-D-ribosyl)imidazole-4-carboxamide + L-glutamine = D-erythro-1-(imidazol-4-yl)glycerol 3-phosphate + 5-amino-1-(5-phospho-beta-D-ribosyl)imidazole-4-carboxamide + L-glutamate + H(+). Its pathway is amino-acid biosynthesis; L-histidine biosynthesis; L-histidine from 5-phospho-alpha-D-ribose 1-diphosphate: step 5/9. IGPS catalyzes the conversion of PRFAR and glutamine to IGP, AICAR and glutamate. The HisF subunit catalyzes the cyclization activity that produces IGP and AICAR from PRFAR using the ammonia provided by the HisH subunit. This is Imidazole glycerol phosphate synthase subunit HisF from Rhodopirellula baltica (strain DSM 10527 / NCIMB 13988 / SH1).